Reading from the N-terminus, the 540-residue chain is Chaperonin GroEL (540 aa).

ATP-binding positions include 30 to 33, lysine 51, 87 to 91, glycine 415, and aspartate 495; these read TLGP and DGTTT.

The protein belongs to the chaperonin (HSP60) family. Forms a cylinder of 14 subunits composed of two heptameric rings stacked back-to-back. Interacts with the co-chaperonin GroES.

The protein localises to the cytoplasm. The catalysed reaction is ATP + H2O + a folded polypeptide = ADP + phosphate + an unfolded polypeptide.. Together with its co-chaperonin GroES, plays an essential role in assisting protein folding. The GroEL-GroES system forms a nano-cage that allows encapsulation of the non-native substrate proteins and provides a physical environment optimized to promote and accelerate protein folding. The protein is Chaperonin GroEL of Erwinia aphidicola.